A 62-amino-acid chain; its full sequence is Large ribosomal subunit protein bL28 (62 aa).

This sequence belongs to the bacterial ribosomal protein bL28 family.

The chain is Large ribosomal subunit protein bL28 from Streptococcus agalactiae serotype Ia (strain ATCC 27591 / A909 / CDC SS700).